A 217-amino-acid chain; its full sequence is MDTSKVHGNVKPFRCPGYKQASSPSFSPDACRCPHWHHLALKSGCAGLILLLLSLIGLSVLVRFLVQKPPIEKCSVAAQENRTELTGRSAILECPRYWHPHWNKCLFVSQISRPWAEGRDACSMEDAILLLIENKEELRFVQNLIKGKEQLFFIGLKYVQKEKIWKWIDGSILNPNLLRITGKDKENSCAIISHTEVFSDSCSSDNHWICQKTLIHV.

Residues 1–45 (MDTSKVHGNVKPFRCPGYKQASSPSFSPDACRCPHWHHLALKSGC) are Cytoplasmic-facing. The LCK-binding motif signature appears at 31-34 (CRCP). Residues 46–66 (AGLILLLLSLIGLSVLVRFLV) traverse the membrane as a helical; Signal-anchor for type II membrane protein segment. Residues 67 to 217 (QKPPIEKCSV…WICQKTLIHV (151 aa)) are Extracellular-facing. N-linked (GlcNAc...) asparagine glycosylation occurs at Asn81. A C-type lectin domain is found at 101-211 (HWNKCLFVSQ…CSSDNHWICQ (111 aa)). Cystine bridges form between Cys122–Cys210 and Cys189–Cys202.

In terms of tissue distribution, highly expressed in dendritic cells. Detectable in natural killer cells.

The protein resides in the membrane. In terms of biological role, binds CLEC2I/Clr-g leading to activation of natural killer cells or costimulation of IL-2 production and proliferation of T-cells in response to antigen stimulation. May contribute to the formation of the immunological synapse between T-cells and antigen-presenting dendritic cells. In Mus musculus (Mouse), this protein is Killer cell lectin-like receptor subfamily B member 1F (Klrb1f).